Reading from the N-terminus, the 193-residue chain is Ion-translocating oxidoreductase complex subunit A (193 aa).

6 helical membrane-spanning segments follow: residues 5-25 (LLLF…FLGL), 39-59 (IGMG…AWMV), 62-82 (FILL…LVIA), 102-122 (LLGI…VALL), 134-154 (AVYG…FAAI), and 171-191 (SIAL…TGLV).

It belongs to the NqrDE/RnfAE family. The complex is composed of six subunits: RnfA, RnfB, RnfC, RnfD, RnfE and RnfG.

The protein localises to the cell inner membrane. Functionally, part of a membrane-bound complex that couples electron transfer with translocation of ions across the membrane. This Yersinia pestis bv. Antiqua (strain Nepal516) protein is Ion-translocating oxidoreductase complex subunit A.